The sequence spans 442 residues: Histidine--tRNA ligase (442 aa).

This sequence belongs to the class-II aminoacyl-tRNA synthetase family. As to quaternary structure, homodimer.

It localises to the cytoplasm. It catalyses the reaction tRNA(His) + L-histidine + ATP = L-histidyl-tRNA(His) + AMP + diphosphate + H(+). This Psychrobacter arcticus (strain DSM 17307 / VKM B-2377 / 273-4) protein is Histidine--tRNA ligase.